A 178-amino-acid polypeptide reads, in one-letter code: MKLITNSAEIKVTENEDGSKSFQGIGSEVGVENRNGIVLTPNCIEFARERYPLLYEHGAGSSEVIGDAKVYYDLASNKYLTDFTLYDNAPNINKAVENGAFDSLSIAYYITDYEFNENDALVVNKAQFKEISLVSVPADPNAKFIQNALGEELTEERNKIIESRNALKEIEDIKKKYE.

Residues 146-178 are a coiled coil; that stretch reads QNALGEELTEERNKIIESRNALKEIEDIKKKYE.

It belongs to the skunalikevirus capsid maturation protease family.

In terms of biological role, probable capsid maturation protease. This is Probable capsid maturation protease from Lactococcus lactis (Lactococcus lactis bacteriophage p2).